Consider the following 176-residue polypeptide: Nucleoside triphosphate/diphosphate phosphatase (176 aa).

The active-site Proton donor is the arginine 23. Mg(2+) is bound by residues asparagine 87, aspartate 103, aspartate 105, aspartate 107, aspartate 120, and glutamate 123.

The protein belongs to the Ntdp family. Requires Mg(2+) as cofactor.

It carries out the reaction a ribonucleoside 5'-triphosphate + H2O = a ribonucleoside 5'-diphosphate + phosphate + H(+). It catalyses the reaction a ribonucleoside 5'-diphosphate + H2O = a ribonucleoside 5'-phosphate + phosphate + H(+). Its function is as follows. Has nucleoside phosphatase activity towards nucleoside triphosphates and nucleoside diphosphates. This chain is Nucleoside triphosphate/diphosphate phosphatase (yjjG), found in Lactococcus lactis subsp. lactis (strain IL1403) (Streptococcus lactis).